The following is a 210-amino-acid chain: Probable septum site-determining protein MinC (210 aa).

It belongs to the MinC family. As to quaternary structure, interacts with MinD and FtsZ.

Functionally, cell division inhibitor that blocks the formation of polar Z ring septums. Rapidly oscillates between the poles of the cell to destabilize FtsZ filaments that have formed before they mature into polar Z rings. Prevents FtsZ polymerization. This chain is Probable septum site-determining protein MinC, found in Thermotoga neapolitana (strain ATCC 49049 / DSM 4359 / NBRC 107923 / NS-E).